The chain runs to 249 residues: O-methyltransferase adaD (249 aa).

The segment covering 1-15 has biased composition (low complexity); that stretch reads MSSVTLTTTTTTTST. The interval 1–26 is disordered; the sequence is MSSVTLTTTTTTTSTPPKPTPKDEPQ.

The protein belongs to the methyltransferase superfamily.

It catalyses the reaction 2-acetyl-3,4a,8,10,11,12a-hexahydroxy-1,4,4a,5,12,12a-hexahydrotetracene-1,12-dione + S-adenosyl-L-methionine = TAN-1612 + S-adenosyl-L-homocysteine + H(+). The protein operates within secondary metabolite biosynthesis. Functionally, O-methyltransferase; part of the gene cluster that mediates the biosynthesis of the linear tetracyclic TAN-1612 neuropeptide Y receptor antagonist. The decaketide backbone of TAN-1612 is synthesized by the non-reducing polyketide synthase adaA via condensation of one acetyl-CoA starter unit with 9 malonyl-CoA units. The FAD-dependent monooxygenase adaC then performs hydroxylation at C2 while the polaketide chain is still attached to the NRPKS adaA. The alpha-hydroxylation step at C2 appears to be crucial for the following C18-C1 Claisen cyclization and release of the C9-hydroxyl version of TAN-1612 from the NRPKS adaA, two steps performed by the lactamase-like protein adaB. Finally, the O-methyltransferase adaD performs the C9 O-methylation to complete the biosynthesis of TAN-1612. This is O-methyltransferase adaD from Aspergillus niger (strain ATCC MYA-4892 / CBS 513.88 / FGSC A1513).